Consider the following 131-residue polypeptide: Histone H2A (131 aa).

The segment at 1–24 is disordered; it reads MSSGGKGKASSETKSSSRSSKAGL. K6 and K8 each carry N6-acetyllysine. Over residues 8-23 the composition is skewed to low complexity; sequence KASSETKSSSRSSKAG. At Q105 the chain carries N5-methylglutamine. Position 128 is a phosphoserine (S128). The [ST]-Q motif signature appears at 128-129; sequence SQ.

It belongs to the histone H2A family. In terms of assembly, the nucleosome is a histone octamer containing two molecules each of H2A, H2B, H3 and H4 assembled in one H3-H4 heterotetramer and two H2A-H2B heterodimers. The octamer wraps approximately 147 bp of DNA. Post-translationally, phosphorylated to form H2AS128ph (gamma-H2A) in response to DNA double-strand breaks (DSBs) generated by exogenous genotoxic agents and by stalled replication forks. Phosphorylation is dependent on the DNA damage checkpoint kinases MEC1/ATR and TEL1/ATM, spreads on either side of a detected DSB site and may mark the surrounding chromatin for recruitment of proteins required for DNA damage signaling and repair. Gamma-H2A is removed from the DNA prior to the strand invasion-primer extension step of the repair process and subsequently dephosphorylated. Dephosphorylation is necessary for efficient recovery from the DNA damage checkpoint. In terms of processing, acetylated by ESA1 to form H2AK4ac and H2AK7ac.

Its subcellular location is the nucleus. The protein resides in the chromosome. Its function is as follows. Core component of nucleosome which plays a central role in DNA double strand break (DSB) repair. Nucleosomes wrap and compact DNA into chromatin, limiting DNA accessibility to the cellular machineries which require DNA as a template. Histones thereby play a central role in transcription regulation, DNA repair, DNA replication and chromosomal stability. DNA accessibility is regulated via a complex set of post-translational modifications of histones, also called histone code, and nucleosome remodeling. This Cryptococcus neoformans var. neoformans serotype D (strain B-3501A) (Filobasidiella neoformans) protein is Histone H2A (HTA1).